The chain runs to 94 residues: ATP synthase F(0) complex subunit f, mitochondrial (94 aa).

Ala2 bears the N-acetylalanine mark. At Ser3 the chain carries Phosphoserine. Lys22 bears the N6-acetyllysine mark. A helical transmembrane segment spans residues 68 to 85 (MVLACYVLFSYSFSYKHL).

Belongs to the ATPase F chain family. Component of the ATP synthase complex composed at least of ATP5F1A/subunit alpha, ATP5F1B/subunit beta, ATP5MC1/subunit c (homooctomer), MT-ATP6/subunit a, MT-ATP8/subunit 8, ATP5ME/subunit e, ATP5MF/subunit f, ATP5MG/subunit g, ATP5MK/subunit k, ATP5MJ/subunit j, ATP5F1C/subunit gamma, ATP5F1D/subunit delta, ATP5F1E/subunit epsilon, ATP5PF/subunit F6, ATP5PB/subunit b, ATP5PD/subunit d, ATP5PO/subunit OSCP. ATP synthase complex consists of a soluble F(1) head domain (subunits alpha(3) and beta(3)) - the catalytic core - and a membrane F(0) domain - the membrane proton channel (subunits c, a, 8, e, f, g, k and j). These two domains are linked by a central stalk (subunits gamma, delta, and epsilon) rotating inside the F1 region and a stationary peripheral stalk (subunits F6, b, d, and OSCP).

The protein localises to the mitochondrion. The protein resides in the mitochondrion inner membrane. Functionally, subunit f, of the mitochondrial membrane ATP synthase complex (F(1)F(0) ATP synthase or Complex V) that produces ATP from ADP in the presence of a proton gradient across the membrane which is generated by electron transport complexes of the respiratory chain. ATP synthase complex consist of a soluble F(1) head domain - the catalytic core - and a membrane F(1) domain - the membrane proton channel. These two domains are linked by a central stalk rotating inside the F(1) region and a stationary peripheral stalk. During catalysis, ATP synthesis in the catalytic domain of F(1) is coupled via a rotary mechanism of the central stalk subunits to proton translocation. In vivo, can only synthesize ATP although its ATP hydrolase activity can be activated artificially in vitro. Part of the complex F(0) domain. The chain is ATP synthase F(0) complex subunit f, mitochondrial from Homo sapiens (Human).